The sequence spans 116 residues: MQIEVVKSKIHRVTVTGADLNYIGSITIDEVLLEASNIIEGEKVNIVNINNGERFETYAIKGAKNSGEITLNGPAARKVHKGDIIIIMSYARMDFEKAKTFKPWLVFPNEKDNSLK.

The active-site Schiff-base intermediate with substrate; via pyruvic acid is the serine 25. Pyruvic acid (Ser) is present on serine 25. Position 57 (threonine 57) interacts with substrate. The Proton donor role is filled by tyrosine 58. 73-75 (GPA) lines the substrate pocket.

This sequence belongs to the PanD family. In terms of assembly, heterooctamer of four alpha and four beta subunits. Requires pyruvate as cofactor. Post-translationally, is synthesized initially as an inactive proenzyme, which is activated by self-cleavage at a specific serine bond to produce a beta-subunit with a hydroxyl group at its C-terminus and an alpha-subunit with a pyruvoyl group at its N-terminus.

The protein resides in the cytoplasm. The enzyme catalyses L-aspartate + H(+) = beta-alanine + CO2. It participates in cofactor biosynthesis; (R)-pantothenate biosynthesis; beta-alanine from L-aspartate: step 1/1. Its function is as follows. Catalyzes the pyruvoyl-dependent decarboxylation of aspartate to produce beta-alanine. The polypeptide is Aspartate 1-decarboxylase (Flavobacterium psychrophilum (strain ATCC 49511 / DSM 21280 / CIP 103535 / JIP02/86)).